A 139-amino-acid polypeptide reads, in one-letter code: Putative nickel-responsive regulator (139 aa).

4 residues coordinate Ni(2+): H79, H90, H92, and C98.

It belongs to the transcriptional regulatory CopG/NikR family. It depends on Ni(2+) as a cofactor.

In terms of biological role, transcriptional regulator. This chain is Putative nickel-responsive regulator, found in Anaeromyxobacter dehalogenans (strain 2CP-C).